We begin with the raw amino-acid sequence, 106 residues long: Large ribosomal subunit protein uL24 (106 aa).

Belongs to the universal ribosomal protein uL24 family. As to quaternary structure, part of the 50S ribosomal subunit.

In terms of biological role, one of two assembly initiator proteins, it binds directly to the 5'-end of the 23S rRNA, where it nucleates assembly of the 50S subunit. Its function is as follows. One of the proteins that surrounds the polypeptide exit tunnel on the outside of the subunit. This is Large ribosomal subunit protein uL24 from Polaromonas sp. (strain JS666 / ATCC BAA-500).